The sequence spans 988 residues: Bifunctional glutamine synthetase adenylyltransferase/adenylyl-removing enzyme (988 aa).

The interval 1–474 (MSSSAIDADI…HYSKLFEGDP (474 aa)) is adenylyl removase. Residues 480–988 (LPIDYAGGAE…FNRLIGGNGE (509 aa)) are adenylyl transferase.

This sequence belongs to the GlnE family. Requires Mg(2+) as cofactor.

It carries out the reaction [glutamine synthetase]-O(4)-(5'-adenylyl)-L-tyrosine + phosphate = [glutamine synthetase]-L-tyrosine + ADP. The catalysed reaction is [glutamine synthetase]-L-tyrosine + ATP = [glutamine synthetase]-O(4)-(5'-adenylyl)-L-tyrosine + diphosphate. In terms of biological role, involved in the regulation of glutamine synthetase GlnA, a key enzyme in the process to assimilate ammonia. When cellular nitrogen levels are high, the C-terminal adenylyl transferase (AT) inactivates GlnA by covalent transfer of an adenylyl group from ATP to specific tyrosine residue of GlnA, thus reducing its activity. Conversely, when nitrogen levels are low, the N-terminal adenylyl removase (AR) activates GlnA by removing the adenylyl group by phosphorolysis, increasing its activity. The regulatory region of GlnE binds the signal transduction protein PII (GlnB) which indicates the nitrogen status of the cell. The sequence is that of Bifunctional glutamine synthetase adenylyltransferase/adenylyl-removing enzyme from Rhodopseudomonas palustris (strain HaA2).